The sequence spans 115 residues: MASTKDEVVRMSVDEYWEDIKDDYLIQLANTDPNEVYPSNNPGPTTADGQINFECHCVGHLVGSPCGFEFREAITCQKTNSDGEIEQGACGKELMSFMECVTRTQCFGTGDNDKK.

Residues Gly63 to Gly108 form the CHCH domain. Short sequence motifs (cx9C motif) lie at residues Cys66 to Cys76 and Cys90 to Cys100. 2 disulfides stabilise this stretch: Cys66-Cys100 and Cys76-Cys90.

This is an uncharacterized protein from Caenorhabditis elegans.